Reading from the N-terminus, the 956-residue chain is ATPase 11, plasma membrane-type (956 aa).

Over 1-65 (MGDKEEVLEA…EKKESKFLKF (65 aa)) the chain is Cytoplasmic. Residues 66 to 85 (LGFMWNPLSWVMEAAAIMAI) form a helical membrane-spanning segment. Topologically, residues 86–97 (ALANGGGKPPDW) are extracellular. The helical transmembrane segment at 98-118 (QDFVGIITLLVINSTISFIEE) threads the bilayer. Topologically, residues 119–247 (NNAGNAAAAL…GHFQQVLTAI (129 aa)) are cytoplasmic. Residues 248-268 (GNFCICSIAVGMIIEIVVMYP) traverse the membrane as a helical segment. At 269 to 277 (IQHRAYRPG) the chain is on the extracellular side. A helical membrane pass occupies residues 278–295 (IDNLLVLLIGGIPIAMPT). At 296-647 (VLSVTMAIGS…TSRAIFQRMK (352 aa)) the chain is on the cytoplasmic side. The 4-aspartylphosphate intermediate role is filled by aspartate 333. Positions 592 and 596 each coordinate Mg(2+). The helical transmembrane segment at 648–669 (NYTIYAVSITIRIVLGFMLLAL) threads the bilayer. Residues 670 to 674 (IWKFD) are Extracellular-facing. A helical membrane pass occupies residues 675–697 (FPPFMVLIIAILNDGTIMTISKD). Over 698 to 713 (RVKPSPLPDSWKLSEI) the chain is Cytoplasmic. The helical transmembrane segment at 714–734 (FATGVVFGSYMAMMTVIFFWA) threads the bilayer. Over 735–759 (AYKTDFFPRTFGVSTLEKTAHDDFR) the chain is Extracellular. The helical transmembrane segment at 760–780 (KLASAIYLQVSIISQALIFVT) threads the bilayer. At 781–792 (RSRSWSYVERPG) the chain is on the cytoplasmic side. A helical membrane pass occupies residues 793-813 (MLLVVAFILAQLVATLIAVYA). The Extracellular segment spans residues 814-821 (NWSFAAIE). The helical transmembrane segment at 822-842 (GIGWGWAGVIWLYNIVFYIPL) threads the bilayer. At 843-956 (DIIKFLIRYA…IETIQQAYTV (114 aa)) the chain is on the cytoplasmic side. Residue threonine 889 is modified to Phosphothreonine. Position 938 is a phosphoserine (serine 938). The interaction with 14-3-3 proteins stretch occupies residues 954 to 956 (YTV). Phosphothreonine is present on threonine 955.

It belongs to the cation transport ATPase (P-type) (TC 3.A.3) family. Type IIIA subfamily. As to quaternary structure, binds to 14-3-3 proteins. The binding is induced by phosphorylation of Thr-955. Binding to 14-3-3 proteins activates the H(+)-ATPase. In terms of tissue distribution, expressed in guard cells, mesophyll cells, leaves and roots.

The protein localises to the membrane. The enzyme catalyses ATP + H2O + H(+)(in) = ADP + phosphate + 2 H(+)(out). The plasma membrane H(+) ATPase of plants and fungi generates a proton gradient that drives the active transport of nutrients by H(+)-symport. The resulting external acidification and/or internal alkinization may mediate growth responses. The polypeptide is ATPase 11, plasma membrane-type (AHA11) (Arabidopsis thaliana (Mouse-ear cress)).